The sequence spans 97 residues: Kininogen-1 (97 aa).

A signal peptide spans 1-23; it reads MRLWFCLSFLIILCVEHFPGTLA.

It belongs to the bradykinin-related peptide family. As to expression, expressed by the skin glands.

The protein resides in the secreted. Functionally, [Ala3,Thr6]bradykinin: produces in vitro relaxation of rat arterial smooth muscle and constriction of intestinal smooth muscle. Possesses insulin-releasing activity. May target bradykinin receptors (BDKRB). The polypeptide is Kininogen-1 (Bombina variegata (Yellow-bellied toad)).